Consider the following 26-residue polypeptide: MAQDIISTIGDLVKWIIDTVNKFTKK.

An N-formylmethionine modification is found at M1.

The protein belongs to the delta-lysin family.

It localises to the secreted. The protein resides in the host cell membrane. Lyses erythrocytes and many other mammalian cells. The polypeptide is Delta-hemolysin (hld) (Staphylococcus aureus (strain Mu50 / ATCC 700699)).